The chain runs to 316 residues: Small ribosomal subunit biogenesis GTPase RsgA (316 aa).

The tract at residues 1 to 20 is disordered; it reads MSKLSHQQQRRIHNHRQNKL. A compositionally biased stretch (basic residues) spans 8-18; that stretch reads QQRRIHNHRQN. The CP-type G domain occupies 92-251; sequence AGKLKPVASN…IIDTPGVRGF (160 aa). GTP-binding positions include 139–142 and 193–201; these read NKSD and GQSGVGKSS. Zn(2+)-binding residues include Cys-275, Cys-280, His-282, and Cys-288.

The protein belongs to the TRAFAC class YlqF/YawG GTPase family. RsgA subfamily. As to quaternary structure, monomer. Associates with 30S ribosomal subunit, binds 16S rRNA. Zn(2+) is required as a cofactor.

It is found in the cytoplasm. In terms of biological role, one of several proteins that assist in the late maturation steps of the functional core of the 30S ribosomal subunit. Helps release RbfA from mature subunits. May play a role in the assembly of ribosomal proteins into the subunit. Circularly permuted GTPase that catalyzes slow GTP hydrolysis, GTPase activity is stimulated by the 30S ribosomal subunit. This chain is Small ribosomal subunit biogenesis GTPase RsgA, found in Dichelobacter nodosus (strain VCS1703A).